Here is a 130-residue protein sequence, read N- to C-terminus: MVRMNVLAAALRCICNAEKRCKRQVLIRPCSKVTIKFLMVMIKHGYIGEFEVVDDHRGGKIIVNLNGRLNKCGVISPRFDVPINDMEKWTSNLLPSRQFGYVVLTTSGGIMDHEEARRKHVGGKILGFFF.

It belongs to the universal ribosomal protein uS8 family.

The protein is Small ribosomal subunit protein uS8 (RPS15A) of Paracentrotus lividus (Common sea urchin).